The sequence spans 655 residues: E3 ubiquitin-protein ligase TRIM32 (655 aa).

The RING-type zinc-finger motif lies at 21 to 66 (CPICMESFTEEQLRPKLLHCGHTICRQCLEKLLASSINGVRCPFCS). S56 is modified (phosphoserine; by CHEK2). A B box-type; atypical zinc finger spans residues 96-139 (VGLLMCRGCGRRLPRQFCRSCGVVLCEPCREADHQPPGHCTLPV). Zn(2+)-binding residues include C101, C104, C124, and H129. Positions 139-198 (VKEAAEERRRDFGEKLTRLRELTGELQRRKAALEGVSRDLQARYKAVLQEYGHEERRIQE) form a coiled coil. The disordered stretch occupies residues 327 to 347 (MDMSPEEVAPSPRASPAKQRS). A phosphoserine mark is found at S330, S337, and S341. 5 NHL repeats span residues 360 to 403 (LKKM…FNRK), 417 to 460 (DSFV…YTMD), 461 to 501 (GHCV…FTVD), 564 to 607 (GRQI…FPKG), and 608 to 648 (GGYS…YSYH).

The protein belongs to the TRIM/RBCC family. As to quaternary structure, it self-associates. Interacts with DTNBP1. Interacts with PIAS4/PIASY upon treatment with UVB and TNF-alpha. Interacts with AMBRA1; promoting activation of ULK1 through unanchored 'Lys-63'-linked polyubiquitin chains. Interacts with TICAM1 and TAX1BP1; these interactions target TICAM1 to TAX1BP1-mediated selective autophagic degradation. Ubiquitinated. Post-translationally, phosphorylation at Ser-56 by CHEK2 under oxidative stress, activates the E3 ligase activity and promotes ATG7 ubiquitination leading to positive regulation of the autophagosme assembly. Ubiquitous. High expression in brain.

The protein resides in the cytoplasm. The enzyme catalyses S-ubiquitinyl-[E2 ubiquitin-conjugating enzyme]-L-cysteine + [acceptor protein]-L-lysine = [E2 ubiquitin-conjugating enzyme]-L-cysteine + N(6)-ubiquitinyl-[acceptor protein]-L-lysine.. It participates in protein modification; protein ubiquitination. In terms of biological role, E3 ubiquitin ligase that plays a role in various biological processes including neural stem cell differentiation, innate immunity, inflammatory resonse and autophagy. Plays a role in virus-triggered induction of IFN-beta and TNF-alpha by mediating the ubiquitination of STING1. Mechanistically, targets STING1 for 'Lys-63'-linked ubiquitination which promotes the interaction of STING1 with TBK1. Regulates bacterial clearance and promotes autophagy in Mycobacterium tuberculosis-infected macrophages. Negatively regulates TLR3/4-mediated innate immune and inflammatory response by triggering the autophagic degradation of TICAM1 in an E3 activity-independent manner. Plays an essential role in oxidative stress induced cell death by inducing loss of transmembrane potential and enhancing mitochondrial reactive oxygen species (ROS) production during oxidative stress conditions. Ubiquitinates XIAP and targets it for proteasomal degradation. Ubiquitinates DTNBP1 (dysbindin) and promotes its degradation. May ubiquitinate BBS2. Ubiquitinates PIAS4/PIASY and promotes its degradation in keratinocytes treated with UVB and TNF-alpha. Also acts as a regulator of autophagy by mediating formation of unanchored 'Lys-63'-linked polyubiquitin chains that activate ULK1: interaction with AMBRA1 is required for ULK1 activation. Positively regulates dendritic branching by promoting ubiquitination and subsequent degradation of the epigenetic factor CDYL. Under metabolic stress and phosphorylation by CHK2, mediates 'Lys-63'-linked ubiquitination of ATG7 at 'Lys-41' to initiate autophagy. In Mus musculus (Mouse), this protein is E3 ubiquitin-protein ligase TRIM32.